The sequence spans 484 residues: Probable chitinase 2 (484 aa).

The first 33 residues, 1 to 33, serve as a signal peptide directing secretion; sequence MTLRSRLSGEAPQLWLLLLLASTASSLWASVAA. Residues 41 to 432 form the GH18 domain; sequence KVVVCYVSTW…RTINEATMLA (392 aa). Residues Cys45 and Cys70 are joined by a disulfide bond. Chitin contacts are provided by residues 98–99 and 125–128; these read EE and GGWN. Glu168 serves as the catalytic Proton donor. Chitin is bound by residues Tyr169, 231–234, and Trp384; that span reads MCYD. Phosphoserine is present on Ser467.

This sequence belongs to the glycosyl hydrolase 18 family. Chitinase class II subfamily.

The enzyme catalyses Random endo-hydrolysis of N-acetyl-beta-D-glucosaminide (1-&gt;4)-beta-linkages in chitin and chitodextrins.. The protein is Probable chitinase 2 of Drosophila melanogaster (Fruit fly).